The primary structure comprises 206 residues: ATP-dependent Clp protease proteolytic subunit 1 (206 aa).

Catalysis depends on Ser-103, which acts as the Nucleophile. The active site involves His-128.

It belongs to the peptidase S14 family. As to quaternary structure, fourteen ClpP subunits assemble into 2 heptameric rings which stack back to back to give a disk-like structure with a central cavity, resembling the structure of eukaryotic proteasomes.

It localises to the cytoplasm. It catalyses the reaction Hydrolysis of proteins to small peptides in the presence of ATP and magnesium. alpha-casein is the usual test substrate. In the absence of ATP, only oligopeptides shorter than five residues are hydrolyzed (such as succinyl-Leu-Tyr-|-NHMec, and Leu-Tyr-Leu-|-Tyr-Trp, in which cleavage of the -Tyr-|-Leu- and -Tyr-|-Trp bonds also occurs).. Functionally, cleaves peptides in various proteins in a process that requires ATP hydrolysis. Has a chymotrypsin-like activity. Plays a major role in the degradation of misfolded proteins. The protein is ATP-dependent Clp protease proteolytic subunit 1 of Protochlamydia amoebophila (strain UWE25).